The following is a 135-amino-acid chain: ATP synthase epsilon chain (135 aa).

It belongs to the ATPase epsilon chain family. As to quaternary structure, F-type ATPases have 2 components, CF(1) - the catalytic core - and CF(0) - the membrane proton channel. CF(1) has five subunits: alpha(3), beta(3), gamma(1), delta(1), epsilon(1). CF(0) has three main subunits: a, b and c.

It is found in the cell inner membrane. Produces ATP from ADP in the presence of a proton gradient across the membrane. The chain is ATP synthase epsilon chain from Nitrobacter winogradskyi (strain ATCC 25391 / DSM 10237 / CIP 104748 / NCIMB 11846 / Nb-255).